The chain runs to 502 residues: Glutamate--tRNA ligase (502 aa).

The 'HIGH' region motif lies at 12-22; sequence PSPTGYLHVGG. Positions 259–263 match the 'KMSKS' region motif; sequence KLSKR. Lys262 contributes to the ATP binding site.

This sequence belongs to the class-I aminoacyl-tRNA synthetase family. Glutamate--tRNA ligase type 1 subfamily. In terms of assembly, monomer.

The protein localises to the cytoplasm. It carries out the reaction tRNA(Glu) + L-glutamate + ATP = L-glutamyl-tRNA(Glu) + AMP + diphosphate. Catalyzes the attachment of glutamate to tRNA(Glu) in a two-step reaction: glutamate is first activated by ATP to form Glu-AMP and then transferred to the acceptor end of tRNA(Glu). The polypeptide is Glutamate--tRNA ligase (Pelodictyon phaeoclathratiforme (strain DSM 5477 / BU-1)).